Consider the following 710-residue polypeptide: Subtilisin-like protease SBT4.8 (710 aa).

Positions 1-23 (MVKRASFCLLSCLIILFLSSVSA) are cleaved as a signal peptide. A propeptide spans 24–111 (IIYDPQDKQV…VFRSKNYKLQ (88 aa)) (activation peptide). Residues 33-110 (VYVVYMGSLP…SVFRSKNYKL (78 aa)) form the Inhibitor I9 domain. The 445-residue stretch at 115-559 (SWDFMGMKEG…AGHVDPIAAI (445 aa)) folds into the Peptidase S8 domain. Asp143 (charge relay system) is an active-site residue. A glycan (N-linked (GlcNAc...) asparagine) is linked at Asn174. The active-site Charge relay system is the His198. 3 N-linked (GlcNAc...) asparagine glycosylation sites follow: Asn221, Asn364, and Asn419. Residues 354 to 414 (KYPLEYGDYL…VLSQDDFDSL (61 aa)) form the PA domain. Residue Ser498 is the Charge relay system of the active site. N-linked (GlcNAc...) asparagine glycans are attached at residues Asn535, Asn568, Asn580, Asn618, and Asn636.

Belongs to the peptidase S8 family. In terms of processing, the C-terminal propeptide is autocleaved.

It is found in the secreted. In Arabidopsis thaliana (Mouse-ear cress), this protein is Subtilisin-like protease SBT4.8.